A 386-amino-acid polypeptide reads, in one-letter code: MIISASTDYRAAAQRRLPPFLFHYIDGGAYGEHTLRRNTADLADIALRQRILKNMSDLSLETQLFGEKLAMPVVLAPVGLTGMYARRGEVQAARAAAQKGIPFTLSTVSVCPIEEVAPAIDRPMWFQLYVLKDRGFMRSALERAQAAGVKTLVFTVDMPTPGARYRDAHSGMSGPNAAARRMLQAVTHPQWAWDVGLNGKPHDLGNVSAYRGKPTTLEDYIGWLAANFDPSISWQDLAWIREFWKGPMIIKGILDPEDAKEAVRFGADGIVVSNHGGRQLDGVLSTAHALPAIADAVKGDITILADSGIRSGLDVVRMIALGADGVMLGRAFVYALAAAGEAGVVNLLNLIEKEMRVAMTLTGAKSIADITSDSLVQVTQRRLDGL.

Positions 1–380 (MIISASTDYR…TSDSLVQVTQ (380 aa)) constitute an FMN hydroxy acid dehydrogenase domain. Tyrosine 24 serves as a coordination point for substrate. Positions 106 and 127 each coordinate FMN. Tyrosine 129 provides a ligand contact to substrate. Threonine 155 provides a ligand contact to FMN. Position 164 (arginine 164) interacts with substrate. Position 251 (lysine 251) interacts with FMN. The Proton acceptor role is filled by histidine 275. Arginine 278 contacts substrate. FMN is bound at residue 306–330 (DSGIRSGLDVVRMIALGADGVMLGR).

It belongs to the FMN-dependent alpha-hydroxy acid dehydrogenase family. Requires FMN as cofactor.

It localises to the cell inner membrane. It carries out the reaction (S)-lactate + A = pyruvate + AH2. Functionally, catalyzes the conversion of L-lactate to pyruvate. Is coupled to the respiratory chain. The protein is L-lactate dehydrogenase of Pectobacterium atrosepticum (strain SCRI 1043 / ATCC BAA-672) (Erwinia carotovora subsp. atroseptica).